The following is a 292-amino-acid chain: MSMPATSTKTTKLATSLIDEYALLGWRAMLTEVNLSPKPGLVDRINCGAHKDMALEDFHRSALAIQGWLPRFIEFGACSAEMAPEAVLNGLRPIGMACEGDMFRATAGVNTHKGSIFSLGLLCAAIGRLLQLNQPVTPTTVCSTAASFCRGLTDRELRTNNARLTAGQRLYQQLGLTGARGEAEAGYPLVINHALPHYLTLLDQGLDPELALLDTLLLLMATNGDTNVASRGGEGGLRWLQREAQTLLQKGGIRTPADLDYLRQFDRECIERNLSPGGSADLLILTWFLAQI.

It belongs to the CitG/MdcB family.

The enzyme catalyses 3'-dephospho-CoA + ATP = 2'-(5''-triphospho-alpha-D-ribosyl)-3'-dephospho-CoA + adenine. In terms of biological role, catalyzes the formation of 2-(5''-triphosphoribosyl)-3'-dephosphocoenzyme-A, the precursor of the prosthetic group of the holo-acyl carrier protein (gamma chain) of citrate lyase, from ATP and dephospho-CoA. The polypeptide is 2-(5''-triphosphoribosyl)-3'-dephosphocoenzyme-A synthase (Escherichia coli O6:K15:H31 (strain 536 / UPEC)).